We begin with the raw amino-acid sequence, 489 residues long: L-arabinose isomerase (489 aa).

Residues Glu300, Glu325, His342, and His441 each contribute to the Mn(2+) site.

It belongs to the arabinose isomerase family. Mn(2+) is required as a cofactor.

It catalyses the reaction beta-L-arabinopyranose = L-ribulose. Its pathway is carbohydrate degradation; L-arabinose degradation via L-ribulose; D-xylulose 5-phosphate from L-arabinose (bacterial route): step 1/3. Catalyzes the conversion of L-arabinose to L-ribulose. The polypeptide is L-arabinose isomerase (Clostridium beijerinckii (strain ATCC 51743 / NCIMB 8052) (Clostridium acetobutylicum)).